The primary structure comprises 335 residues: Putative type I specificity subunit S.MpnORF89P (335 aa).

This sequence belongs to the type-I restriction system S methylase family. The methyltransferase is composed of M and S polypeptides.

Its function is as follows. The specificity (S) subunit of a type I methyltransferase (MTase); this subunit dictates DNA sequence specificity. The single R subunit has multiple frameshifts and is probably not expressed. The chain is Putative type I specificity subunit S.MpnORF89P from Mycoplasma pneumoniae (strain ATCC 29342 / M129 / Subtype 1) (Mycoplasmoides pneumoniae).